Reading from the N-terminus, the 545-residue chain is Protein FAR1-RELATED SEQUENCE 9 (545 aa).

The FAR1 domain maps to Leu22–Val65. In terms of domain architecture, MULE spans Phe66 to Phe150. The SWIM-type zinc finger occupies His345–Asn381. A disordered region spans residues Ser460–Arg495. The stretch at Glu492 to Glu545 forms a coiled coil.

Belongs to the FHY3/FAR1 family. Expressed in hypocotyls, rosette and cauline leaves, inflorescences stems, flowers and siliques.

It localises to the nucleus. Its function is as follows. Putative transcription activator involved in regulating light control of development. May act as a negative regulator specific to phyB signaling. The protein is Protein FAR1-RELATED SEQUENCE 9 (FRS9) of Arabidopsis thaliana (Mouse-ear cress).